We begin with the raw amino-acid sequence, 437 residues long: tRNA-queuosine alpha-mannosyltransferase (437 aa).

It belongs to the glycosyltransferase group 1 family. Glycosyltransferase 4 subfamily.

It is found in the cytoplasm. Its subcellular location is the nucleus. The enzyme catalyses queuosine(34) in tRNA(Asp) + GDP-alpha-D-mannose = O-4''-alpha-D-mannosylqueuosine(34) in tRNA(Asp) + GDP + H(+). Glycosyltransferase that specifically catalyzes mannosylation of cytoplasmic tRNA(Asp) modified with queuosine at position 34 (queuosine(34)). Mannosylates the cyclopentene moiety of queuosine(34) in tRNA(Asp) to form mannosyl-queuosine(34). Mannosylation of queuosine(34) in tRNA(Asp) is required to slow-down elongation at cognate codons, GAC and GAU, thereby regulating protein translation. This Xenopus laevis (African clawed frog) protein is tRNA-queuosine alpha-mannosyltransferase (gtdc1).